The sequence spans 784 residues: Armadillo repeat-containing X-linked protein 2 (784 aa).

Over 1-6 (MSRARD) the chain is Mitochondrial intermembrane. Mitochondrion outer membrane (MOM)-targeting sequence regions lie at residues 1–6 (MSRARD) and 26–40 (KYTR…RLTK). Residues 7–27 (AGCVAAGIVIGASAWYCVYKY) form a helical; Signal-anchor membrane-spanning segment. Over 28–784 (TRGKDQKKKR…VKVIKLVNKF (757 aa)) the chain is Cytoplasmic. Disordered regions lie at residues 328–353 (TSGG…RTAS), 388–461 (HSGA…ELGM), and 488–522 (PESE…TIPM). Residues 396–418 (GTSGSSKTAATGKKAAPGAHTGA) show a composition bias toward low complexity. Over residues 488–508 (PESEEGESGWTDTESDSDSEP) the composition is skewed to acidic residues. ARM repeat units follow at residues 528–568 (PYEI…NNAN), 570–609 (SCNQ…NLSE), and 650–689 (ITND…NFAE).

Belongs to the eutherian X-chromosome-specific Armcx family. As to expression, widely expressed in the adult nervous tissue, especially in the forebrain, including the cerebral cortex, hippocampus and thalamus.

The protein resides in the mitochondrion. The protein localises to the mitochondrion outer membrane. May regulate the dynamics and distribution of mitochondria in neural cells. The polypeptide is Armadillo repeat-containing X-linked protein 2 (Armcx2) (Mus musculus (Mouse)).